The chain runs to 48 residues: Delta-actitoxin-Bcg1b (48 aa).

3 disulfides stabilise this stretch: Cys4–Cys45, Cys6–Cys35, and Cys28–Cys46.

Belongs to the sea anemone sodium channel inhibitory toxin family. Type I subfamily.

It localises to the secreted. It is found in the nematocyst. In terms of biological role, binds to the sodium channels Nav1.1/SCN1A (EC(50)=165 nM), Nav1.5/SCN5A (EC(50)=103 nM) and Nav1.6/SCN8A (EC(50)=133 nM), thereby delaying their inactivation. Also inhibits Nav1.2/SCN2A, Nav1.3/SCN3A, and Nav1.4/SCN4A, but to a lesser extent. Inhibits Nav1.5 differently from isoforms Nav1.1 and Nav1.6. In Nav1.5 the effect consists in a right-shift of inactivation; whereas in both Nav1.1 and Nav1.6 the effect consists in an incomplete inactivation. This chain is Delta-actitoxin-Bcg1b, found in Bunodosoma cangicum (Sea anemone).